Here is a 481-residue protein sequence, read N- to C-terminus: Cytochrome P450 monooxygenase dpfgJ (481 aa).

Residues 23-43 (LVFTQAAVIGSILFVFLLGLY) form a helical membrane-spanning segment. N338 is a glycosylation site (N-linked (GlcNAc...) asparagine). Position 427 (C427) interacts with heme.

This sequence belongs to the cytochrome P450 family. Requires heme as cofactor.

The protein localises to the membrane. It functions in the pathway secondary metabolite biosynthesis; terpenoid biosynthesis. Cytochrome P450 monooxygenase; part of the gene cluster that mediates the biosynthesis of diterpenoid pyrones. The first step of the pathway is the synthesis of the alpha-pyrone moiety by the polyketide synthase dpfgA via condensation of one acetyl-CoA starter unit with 3 malonyl-CoA units and 2 methylations. The alpha-pyrone is then combined with geranylgeranyl pyrophosphate (GGPP) formed by the GGPP synthase dpfgD through the action of the prenyltransferase dpfgC to yield a linear alpha-pyrone diterpenoid. Subsequent steps in the diterpenoid pyrone biosynthetic pathway involve the decalin core formation, which is initiated by the epoxidation of the C10-C11 olefin by the FAD-dependent oxidoreductase dpfgE, and is followed by a cyclization cascade catalyzed by the terpene cyclase dpfgB. The short chain dehydrogenase/reductase dpfgG then oxidizes the 8S hydroxy group to a ketone and the short chain dehydrogenase/reductase dpfgH reduces the ketone to the 8R hydroxy group to yield higginsianin B. Higginsianin B is further methylated by the methyltransferase dpfgI to produce the intermediate named FDDP B. The cytochrome P450 monooxygenase dfgpJ then catalyzes a three-step oxidation at C-27 to generate a carboxylic acid as well as C-26 hydroxylation. Finally, methyltransferase dpfgK methylates the carboxylic acid generated by dpfgJ, yielding the final diterpenoid pyrones from the pathway which were named FDDP D and FDDP E. This chain is Cytochrome P450 monooxygenase dpfgJ, found in Gibberella zeae (strain ATCC MYA-4620 / CBS 123657 / FGSC 9075 / NRRL 31084 / PH-1) (Wheat head blight fungus).